The sequence spans 185 residues: NEDD8-conjugating enzyme UBE2F (185 aa).

Methionine 1 is modified (N-acetylmethionine). The region spanning 32–185 (VRDKLLVKEV…VDEYIKRYAR (154 aa)) is the UBC core domain. The Glycyl thioester intermediate role is filled by cysteine 116.

The protein belongs to the ubiquitin-conjugating enzyme family. UBE2F subfamily. As to quaternary structure, interacts with UBA3 and RBX2. Interacts (N-terminally acetylated form) with (via DCUN1 domain) DCUN1D1, DCUN1D2, DCUN1D3, DCUN1D4 and DCUN1D5. In terms of processing, the acetylation of Met-1 increases affinity for DCUN1D3 by about 2 orders of magnitude and is crucial for NEDD8 transfer to cullins.

It carries out the reaction [E1 NEDD8-activating enzyme]-S-[NEDD8 protein]-yl-L-cysteine + [E2 NEDD8-conjugating enzyme]-L-cysteine = [E1 NEDD8-activating enzyme]-L-cysteine + [E2 NEDD8-conjugating enzyme]-S-[NEDD8-protein]-yl-L-cysteine.. It participates in protein modification; protein neddylation. Accepts the ubiquitin-like protein NEDD8 from the UBA3-NAE1 E1 complex and catalyzes its covalent attachment to other proteins. Together with the E3 ubiquitin ligase RNF7/RBX2, specifically neddylates cullin-5 (CUL5). Does not neddylate CUL1, CUL2, CUL3, CUL4A or CUL4B. Mediates neddylation of the CUL9-RBX1 complex. The sequence is that of NEDD8-conjugating enzyme UBE2F (Ube2f) from Rattus norvegicus (Rat).